Here is a 227-residue protein sequence, read N- to C-terminus: PKHD-type hydroxylase BPSS1206 (227 aa).

A Fe2OG dioxygenase domain is found at 78–178 (KVFPPLFNRY…RVASFFWIQS (101 aa)). Fe cation is bound by residues His96, Asp98, and His159. Arg169 contributes to the 2-oxoglutarate binding site.

The cofactor is Fe(2+). It depends on L-ascorbate as a cofactor.

The sequence is that of PKHD-type hydroxylase BPSS1206 from Burkholderia pseudomallei (strain K96243).